Reading from the N-terminus, the 567-residue chain is Alpha-glucosidase (567 aa).

The N-terminal stretch at methionine 1–alanine 17 is a signal peptide. N-linked (GlcNAc...) asparagine glycosylation is found at asparagine 88 and asparagine 123. Aspartate 223 acts as the Nucleophile in catalysis. A glycan (N-linked (GlcNAc...) asparagine) is linked at asparagine 247. Glutamate 286 serves as the catalytic Proton donor. Asparagine 290, asparagine 313, asparagine 319, asparagine 499, and asparagine 507 each carry an N-linked (GlcNAc...) asparagine glycan.

In terms of assembly, monomer. Expressed specifically in the hypopharyngeal glands of worker bees. Also found in the brain of worker bees (at protein level).

The catalysed reaction is Hydrolysis of terminal, non-reducing (1-&gt;4)-linked alpha-D-glucose residues with release of alpha-D-glucose.. Its function is as follows. Converts sucrose in nectar to glucose and fructose. The chain is Alpha-glucosidase from Apis mellifera (Honeybee).